We begin with the raw amino-acid sequence, 383 residues long: Lipid-A-disaccharide synthase (383 aa).

Belongs to the LpxB family.

It carries out the reaction a lipid X + a UDP-2-N,3-O-bis[(3R)-3-hydroxyacyl]-alpha-D-glucosamine = a lipid A disaccharide + UDP + H(+). The protein operates within bacterial outer membrane biogenesis; LPS lipid A biosynthesis. In terms of biological role, condensation of UDP-2,3-diacylglucosamine and 2,3-diacylglucosamine-1-phosphate to form lipid A disaccharide, a precursor of lipid A, a phosphorylated glycolipid that anchors the lipopolysaccharide to the outer membrane of the cell. This is Lipid-A-disaccharide synthase from Anaeromyxobacter dehalogenans (strain 2CP-1 / ATCC BAA-258).